The sequence spans 221 residues: 7-cyano-7-deazaguanine synthase (221 aa).

10–20 (FSGGQDSTTCL) is an ATP binding site. Residues Cys-186, Cys-195, Cys-198, and Cys-201 each contribute to the Zn(2+) site.

It belongs to the QueC family. Homodimer. The cofactor is Zn(2+).

It catalyses the reaction 7-carboxy-7-deazaguanine + NH4(+) + ATP = 7-cyano-7-deazaguanine + ADP + phosphate + H2O + H(+). Its pathway is purine metabolism; 7-cyano-7-deazaguanine biosynthesis. Its function is as follows. Catalyzes the ATP-dependent conversion of 7-carboxy-7-deazaguanine (CDG) to 7-cyano-7-deazaguanine (preQ(0)). This chain is 7-cyano-7-deazaguanine synthase, found in Geobacillus kaustophilus (strain HTA426).